The chain runs to 373 residues: Probable pectin lyase D (373 aa).

Residues 1–24 form the signal peptide; the sequence is MKYAAALTAVAALAARAAAVGVSG. 2 cysteine pairs are disulfide-bonded: Cys82-Cys101 and Cys91-Cys225. N-linked (GlcNAc...) asparagine glycosylation is present at Asn128. Arg255 is a catalytic residue. Asn274 carries an N-linked (GlcNAc...) asparagine glycan. Cys321 and Cys329 are disulfide-bonded. Asn348 carries an N-linked (GlcNAc...) asparagine glycan. Over residues 354–366 the composition is skewed to low complexity; the sequence is LPSADAASTSPAS. Residues 354–373 are disordered; that stretch reads LPSADAASTSPASNAGQGNL.

The protein belongs to the polysaccharide lyase 1 family.

The protein localises to the secreted. It catalyses the reaction Eliminative cleavage of (1-&gt;4)-alpha-D-galacturonan methyl ester to give oligosaccharides with 4-deoxy-6-O-methyl-alpha-D-galact-4-enuronosyl groups at their non-reducing ends.. Its function is as follows. Pectinolytic enzymes consist of four classes of enzymes: pectin lyase, polygalacturonase, pectin methylesterase and rhamnogalacturonase. Among pectinolytic enzymes, pectin lyase is the most important in depolymerization of pectin, since it cleaves internal glycosidic bonds of highly methylated pectins. The protein is Probable pectin lyase D (pelD) of Aspergillus niger (strain ATCC MYA-4892 / CBS 513.88 / FGSC A1513).